Reading from the N-terminus, the 497-residue chain is Angiopoietin-1 (497 aa).

The first 15 residues, 1-15, serve as a signal peptide directing secretion; the sequence is MTVFLSFAFLAAILT. 5 N-linked (GlcNAc...) asparagine glycosylation sites follow: N92, N122, N154, N243, and N294. A coiled-coil region spans residues 153-261; that stretch reads LNQTSRLEIQ…LELMDTVHNL (109 aa). Residues 276–496 enclose the Fibrinogen C-terminal domain; that stretch reads KEEEKPFRDC…STTMMIRPLD (221 aa). 2 cysteine pairs are disulfide-bonded: C285-C314 and C438-C451.

In terms of assembly, homooligomer. Interacts with TEK/TIE2. Interacts with SVEP1/polydom. Interacts with THBD; this interaction significantly inhibits the generation of activated PC and TAFIa/CPB2 by the thrombin/thrombomodulin complex.

It is found in the secreted. Functionally, binds and activates TIE2 receptor by inducing its tyrosine phosphorylation. Implicated in endothelial developmental processes later and distinct from that of VEGF. Appears to play a crucial role in mediating reciprocal interactions between the endothelium and surrounding matrix and mesenchyme. Mediates blood vessel maturation/stability. It may play an important role in the heart early development. The chain is Angiopoietin-1 (ANGPT1) from Bos taurus (Bovine).